We begin with the raw amino-acid sequence, 306 residues long: Transcription factor MYBS1 (306 aa).

Positions 18–73 (WTREDDKAFENALAACAAPPPADGGAPDDDWFAALAASVPGARSAEEVRRHYEALV) constitute a Myb-like domain. The Nuclear export signal 1 signature appears at 72-86 (LVEDVAAIDAGRVPL). The disordered stretch occupies residues 89–142 (YAGEESAAPPDGAGAAAAASKDGGHRRDERKGGGGGYDGGKSCSKAEQERRKGI). Residues 92 to 109 (EESAAPPDGAGAAAAASK) show a composition bias toward low complexity. Composition is skewed to basic and acidic residues over residues 110–120 (DGGHRRDERKG) and 132–142 (SKAEQERRKGI). The short motif at 133 to 140 (KAEQERRK) is the Nuclear localization signal 1 element. The region spanning 136 to 192 (QERRKGIPWTEEEHRLFLLGLDKFGKGDWRSISRNFVISRTPTQVASHAQKYFIRLN) is the HTH myb-type domain. Residues 164–188 (WRSISRNFVISRTPTQVASHAQKYF) constitute a DNA-binding region (H-T-H motif). The Nuclear localization signal 2 motif lies at 196-200 (RDRRR). The Nuclear export signal 2 signature appears at 203-215 (IHDITSVTAGDQV). A compositionally biased stretch (low complexity) spans 228 to 241 (ATGNPAAAALGPPG). The interval 228–255 (ATGNPAAAALGPPGMKHHHHHHPGGAPP) is disordered.

Homodimer. Interacts with GAMYB. As to expression, expressed in aboveground tissues, with the highest level in leaves.

The protein localises to the nucleus. Its subcellular location is the cytoplasm. Its function is as follows. Transcription activator that binds to 5'-TATCCA-3' elements in gene promoters. Derepresses strongly the sugar-repressed transcription of promoters containing SRS or 5'-TATCCA-3' elements. Functions with GAMYB to integrate diverse nutrient starvation and gibberellin (GA) signaling pathways during germination of grains. Sugar, nitrogen and phosphate starvation signals converge and interconnect with GA to promote the co-nuclear import of MYBS1 and GAMYB, resulting in the expression of a large set of GA-inducible hydrolases, transporters, and regulators that are essential for mobilization of nutrient reserves in the endosperm to support seedling growth. The protein is Transcription factor MYBS1 of Oryza sativa subsp. japonica (Rice).